The sequence spans 131 residues: Large ribosomal subunit protein bL12 (131 aa).

Residues 100-125 show a composition bias toward basic and acidic residues; that stretch reads STPKPIKEGISKEDAEAAKKQLEDAG. Residues 100–131 are disordered; it reads STPKPIKEGISKEDAEAAKKQLEDAGGKVSIK.

It belongs to the bacterial ribosomal protein bL12 family. In terms of assembly, homodimer. Part of the ribosomal stalk of the 50S ribosomal subunit. Forms a multimeric L10(L12)X complex, where L10 forms an elongated spine to which 2 to 4 L12 dimers bind in a sequential fashion. Binds GTP-bound translation factors.

In terms of biological role, forms part of the ribosomal stalk which helps the ribosome interact with GTP-bound translation factors. Is thus essential for accurate translation. This is Large ribosomal subunit protein bL12 from Cyanothece sp. (strain PCC 7425 / ATCC 29141).